A 372-amino-acid chain; its full sequence is Cytochrome b (372 aa).

Helical transmembrane passes span 25–45 (FGSM…FLAI), 69–90 (WIMQ…YIHI), 105–125 (WLSG…GYVL), and 170–190 (FFAL…IHIM). 2 residues coordinate heme b: histidine 75 and histidine 89. Positions 174 and 188 each coordinate heme b. A ubiquinone is bound at residue histidine 193. 4 consecutive transmembrane segments (helical) span residues 218–238 (HKDI…MTLT), 280–300 (LGGT…PFTH), 312–332 (LTQL…WAAT), and 339–358 (FTMI…IMNP).

The protein belongs to the cytochrome b family. As to quaternary structure, the cytochrome bc1 complex contains 3 respiratory subunits (MT-CYB, CYC1 and UQCRFS1), 2 core proteins (UQCRC1 and UQCRC2) and probably 6 low-molecular weight proteins. Requires heme b as cofactor.

It is found in the mitochondrion inner membrane. Functionally, component of the ubiquinol-cytochrome c reductase complex (complex III or cytochrome b-c1 complex) that is part of the mitochondrial respiratory chain. The b-c1 complex mediates electron transfer from ubiquinol to cytochrome c. Contributes to the generation of a proton gradient across the mitochondrial membrane that is then used for ATP synthesis. The chain is Cytochrome b (MT-CYB) from Lycodon semicarinatus (Ryukyu odd-tooth snake).